The chain runs to 287 residues: Putative inactive carboxylesterase 4 (287 aa).

An N-terminal signal peptide occupies residues 1–18 (MWLPALVLATLAASAAWA). A glycan (N-linked (GlcNAc...) asparagine) is linked at asparagine 80.

The protein belongs to the type-B carboxylesterase/lipase family. As to expression, expressed in placenta.

It is found in the secreted. Functionally, has no esterase activity. The polypeptide is Putative inactive carboxylesterase 4 (CES1P1) (Homo sapiens (Human)).